The chain runs to 444 residues: Cell division cycle 20.4, cofactor of APC complex (444 aa).

The span at 88–99 (LLSTNHSDSPHQ) shows a compositional bias: polar residues. The interval 88-108 (LLSTNHSDSPHQNPKPVKPRR) is disordered. 7 WD repeats span residues 124–161 (RDDF…TSEL), 166–205 (EDKG…QVRT), 209–246 (GHES…SIVE), 250–289 (GHTE…SKQT), 298–340 (EHTA…CLNS), 342–383 (ETGS…KMAE), and 386–425 (GHTS…PKTT).

The protein belongs to the WD repeat CDC20/Fizzy family. As to quaternary structure, the APC/C is composed of at least 11 subunits that stay tightly associated throughout the cell cycle.

It is found in the cytoplasm. The protein operates within protein modification; protein ubiquitination. Component of the anaphase promoting complex/cyclosome (APC/C), a cell cycle-regulated E3 ubiquitin-protein ligase complex that controls progression through mitosis and the G1 phase of the cell cycle. The polypeptide is Cell division cycle 20.4, cofactor of APC complex (CDC20-4) (Arabidopsis thaliana (Mouse-ear cress)).